A 376-amino-acid chain; its full sequence is Putative glutamate--cysteine ligase 2-3 (376 aa).

Belongs to the glutamate--cysteine ligase type 2 family. YbdK subfamily.

It carries out the reaction L-cysteine + L-glutamate + ATP = gamma-L-glutamyl-L-cysteine + ADP + phosphate + H(+). Functionally, ATP-dependent carboxylate-amine ligase which exhibits weak glutamate--cysteine ligase activity. This chain is Putative glutamate--cysteine ligase 2-3, found in Nocardioides sp. (strain ATCC BAA-499 / JS614).